Consider the following 199-residue polypeptide: Recombination protein RecR (199 aa).

The C4-type zinc-finger motif lies at 57 to 72 (CQSCRTFTEETYCPIC). Positions 81-176 (DIICVVETPA…MVSRIAHGVP (96 aa)) constitute a Toprim domain.

This sequence belongs to the RecR family.

In terms of biological role, may play a role in DNA repair. It seems to be involved in an RecBC-independent recombinational process of DNA repair. It may act with RecF and RecO. The protein is Recombination protein RecR of Shewanella halifaxensis (strain HAW-EB4).